A 409-amino-acid polypeptide reads, in one-letter code: Arginine biosynthesis bifunctional protein ArgJ (409 aa).

Threonine 165, lysine 191, threonine 202, glutamate 282, asparagine 404, and threonine 409 together coordinate substrate. Threonine 202 acts as the Nucleophile in catalysis.

Belongs to the ArgJ family. As to quaternary structure, heterotetramer of two alpha and two beta chains.

It localises to the cytoplasm. The catalysed reaction is N(2)-acetyl-L-ornithine + L-glutamate = N-acetyl-L-glutamate + L-ornithine. It carries out the reaction L-glutamate + acetyl-CoA = N-acetyl-L-glutamate + CoA + H(+). Its pathway is amino-acid biosynthesis; L-arginine biosynthesis; L-ornithine and N-acetyl-L-glutamate from L-glutamate and N(2)-acetyl-L-ornithine (cyclic): step 1/1. It participates in amino-acid biosynthesis; L-arginine biosynthesis; N(2)-acetyl-L-ornithine from L-glutamate: step 1/4. Catalyzes two activities which are involved in the cyclic version of arginine biosynthesis: the synthesis of N-acetylglutamate from glutamate and acetyl-CoA as the acetyl donor, and of ornithine by transacetylation between N(2)-acetylornithine and glutamate. This is Arginine biosynthesis bifunctional protein ArgJ from Parasynechococcus marenigrum (strain WH8102).